The sequence spans 159 residues: Phosphopantetheine adenylyltransferase (159 aa).

Thr-9 contacts substrate. ATP contacts are provided by residues 9–10 (TF) and His-17. Substrate is bound by residues Lys-41, Leu-73, and Arg-87. ATP contacts are provided by residues 88 to 90 (GLR), Glu-98, and 123 to 129 (YSFISST).

This sequence belongs to the bacterial CoaD family. Homohexamer. Requires Mg(2+) as cofactor.

It is found in the cytoplasm. It catalyses the reaction (R)-4'-phosphopantetheine + ATP + H(+) = 3'-dephospho-CoA + diphosphate. It participates in cofactor biosynthesis; coenzyme A biosynthesis; CoA from (R)-pantothenate: step 4/5. In terms of biological role, reversibly transfers an adenylyl group from ATP to 4'-phosphopantetheine, yielding dephospho-CoA (dPCoA) and pyrophosphate. This chain is Phosphopantetheine adenylyltransferase, found in Pseudomonas syringae pv. syringae (strain B728a).